A 217-amino-acid polypeptide reads, in one-letter code: Ribosome maturation factor RimP (217 aa).

The protein belongs to the RimP family.

The protein resides in the cytoplasm. Its function is as follows. Required for maturation of 30S ribosomal subunits. This is Ribosome maturation factor RimP from Nocardia farcinica (strain IFM 10152).